The primary structure comprises 461 residues: MAAAGLALQRYLLLLAQEHLEFRLPEITSLLSLCGGQFSSQQEVCVNSPFWILNIPSEEMARGLMRRTVCAKSIFELWGHGRSAGELYASLKNYPTDKMLPYLQPDSTYKIHIHTFNKTLTQAQKIKKIDALEFLPFSGKVNLKNPEHIFWILEDYGMDPNNVPEEPFDLYFGRWIADGQRELIESYSIKKRHFIGNTSMDACLSFIMANHGRVKPNDIVYDPFVGTGGLLISSAHFGAYVCGTGIDYNTIHGLGKASRKNQKWRGPDENIRANLRQYGLEKYYLDALVSDSSRPIWRKGTLFDAIITDPPYGIREATRRTGSQKESVKSSERSTENHIIISSSYHLSDIFFDLLKFAAEYLVMGGRLVYWLPIYRPEYTEEIVPRHPCLKLISNCEQMLSSHTSRRLITMEKVKEFKDQDQNSYLSDGQYMPYKGHNSFREKYFSGVTKRIAKEEKDNQK.

The protein belongs to the class I-like SAM-binding methyltransferase superfamily. TRM11 methyltransferase family. Part of the heterodimeric TRMT11-TRM112 methyltransferase complex; this complex forms an active tRNA methyltransferase, where TRMT112 acts as an activator of the catalytic subunit TRMT11.

The protein localises to the cytoplasm. The catalysed reaction is guanosine(10) in tRNA + S-adenosyl-L-methionine = N(2)-methylguanosine(10) in tRNA + S-adenosyl-L-homocysteine + H(+). Functionally, catalytic subunit of the TRMT11-TRM112 methyltransferase complex, that specifically mediates the S-adenosyl-L-methionine-dependent N(2)-methylation of guanosine nucleotide at position 10 (m2G10) in tRNAs. This is one of the major tRNA (guanine-N(2))-methyltransferases. The polypeptide is tRNA (guanine(10)-N(2))-methyltransferase TRMT11 (Gallus gallus (Chicken)).